Here is a 498-residue protein sequence, read N- to C-terminus: ATP synthase subunit beta, chloroplastic (498 aa).

172–179 (GGAGVGKT) contributes to the ATP binding site.

Belongs to the ATPase alpha/beta chains family. As to quaternary structure, F-type ATPases have 2 components, CF(1) - the catalytic core - and CF(0) - the membrane proton channel. CF(1) has five subunits: alpha(3), beta(3), gamma(1), delta(1), epsilon(1). CF(0) has four main subunits: a(1), b(1), b'(1) and c(9-12).

The protein localises to the plastid. Its subcellular location is the chloroplast thylakoid membrane. The catalysed reaction is ATP + H2O + 4 H(+)(in) = ADP + phosphate + 5 H(+)(out). Produces ATP from ADP in the presence of a proton gradient across the membrane. The catalytic sites are hosted primarily by the beta subunits. The sequence is that of ATP synthase subunit beta, chloroplastic from Saccharum hybrid (Sugarcane).